A 586-amino-acid polypeptide reads, in one-letter code: MPLPYVGMALRRLAWAVASCRLAPWTRGASGPLHSAPAARSDCSAPVFIRAPAFGDRLALIDQHGRHTYKDLYLRSLRLSREICQLRACADGDLREERVSLLCSNDVSFVVAQWAAWMSGGVAVPLYRKHPRAQLEYFIQDSRSSVVLAGPEHVELLSPVAQKLGVPLLPLPPTVYHGVAEDPEEGLVLERNWRDRGAMIIYTSGTTGRPKGVLSTHDNIRAVVTGLVHKWAWTKDDVILHVLPLHHVHGVVNKLLCPLWVGATCVMLPEFSAQLVWEKFLSSEAPQINVFMAVPTIYSKLMDYYDKHFTQPHVQDFVRAVCEEKIRLMVSGSAALPLPVLEKWKGITGHTLLERYGMTEIGMALSNPLTAARLPGSVGTPLPGVEVRIVSENPQKDSSPYLIHAEGSEENTKVTPGFEEKEGELLVRGPSVFREYWDKPEETKAAFTSDGWFKTGDTVVFKDGCYWIRGRTSVDIIKSGGYKVSALEVERLLLAHPSITDVAVIGVPDMTWGQRVTAVVTLQEGHSLSHRELKEWARGVLAPYAVPSELLLVEEIPRNQMGKVNKRDLVRQLYPHEKGAPEAGSQ.

A mitochondrion-targeting transit peptide spans 1–89; the sequence is MPLPYVGMAL…SREICQLRAC (89 aa). ATP contacts are provided by residues 203–211, D457, R471, and K563; that span reads TSGTTGRPK.

The protein belongs to the ATP-dependent AMP-binding enzyme family.

It localises to the mitochondrion. It carries out the reaction tetracosanoate + ATP + CoA = tetracosanoyl-CoA + AMP + diphosphate. The catalysed reaction is malonate + ATP + CoA = malonyl-CoA + AMP + diphosphate. Its function is as follows. Catalyzes the initial reaction in intramitochondrial fatty acid synthesis, by activating malonate and methylmalonate, but not acetate, into their respective CoA thioester. May have some preference toward very-long-chain substrates. This is Malonate--CoA ligase ACSF3, mitochondrial from Bos taurus (Bovine).